Here is a 95-residue protein sequence, read N- to C-terminus: Opiscorpine-1 (95 aa).

Positions 1–19 (MNNKLTALIFLGLLAIASC) are cleaved as a signal peptide. Residues 55-95 (EFMCVANVDMTKSCDTHCQKASGEKGYCHGTKCKCGVPLSY) form the BetaSPN-type CS-alpha/beta domain. Intrachain disulfides connect Cys58–Cys82, Cys68–Cys87, and Cys72–Cys89.

The protein belongs to the long chain scorpion toxin family. Class 3 subfamily. Expressed by the venom gland.

Its subcellular location is the secreted. Functionally, the short synthetic peptide (20-54) has antimicrobial activity against the yeasts F.culmorum (IC(50)=8.8 uM) and F.oxysporum (IC(50)=10 uM), and the Gram-negative bacteria E.coli. The sequence is that of Opiscorpine-1 from Opistophthalmus carinatus (African yellow leg scorpion).